The following is an 80-amino-acid chain: uncharacterized protein (80 aa).

The signal sequence occupies residues 1–15 (MEVIVVIVVIVVVIA). Low complexity predominate over residues 23-44 (NSNSNSNNSSDSSNESNNSDSS). Residues 23–52 (NSNSNSNNSSDSSNESNNSDSSKNGGSDIY) are disordered. N-linked (GlcNAc...) asparagine glycans are attached at residues asparagine 29, asparagine 30, asparagine 36, asparagine 39, and asparagine 64.

Its subcellular location is the secreted. This is an uncharacterized protein from Dictyostelium discoideum (Social amoeba).